Reading from the N-terminus, the 375-residue chain is DNA replication and repair protein RecF (375 aa).

Residue 30-37 (GLNGQGKT) coordinates ATP.

This sequence belongs to the RecF family.

The protein resides in the cytoplasm. Its function is as follows. The RecF protein is involved in DNA metabolism; it is required for DNA replication and normal SOS inducibility. RecF binds preferentially to single-stranded, linear DNA. It also seems to bind ATP. This chain is DNA replication and repair protein RecF, found in Halothermothrix orenii (strain H 168 / OCM 544 / DSM 9562).